The following is a 263-amino-acid chain: uncharacterized protein (263 aa).

A disordered region spans residues 198–224 (KRSSDSFVSLKPGEDEHSPLEISTCGN).

This is an uncharacterized protein from Saccharomyces cerevisiae (strain ATCC 204508 / S288c) (Baker's yeast).